The following is a 289-amino-acid chain: NAC domain-containing protein 2 (289 aa).

The 152-residue stretch at 7–158 (LPPGFRFHPT…DWVLCRIYNK (152 aa)) folds into the NAC domain.

As to quaternary structure, interacts with KIN10 and KIN11.

Its subcellular location is the nucleus. The sequence is that of NAC domain-containing protein 2 (NAC002) from Arabidopsis thaliana (Mouse-ear cress).